Here is a 261-residue protein sequence, read N- to C-terminus: Ribosomal RNA small subunit methyltransferase A (261 aa).

The S-adenosyl-L-methionine site is built by asparagine 11, leucine 13, glycine 38, glutamate 59, aspartate 84, and serine 106.

This sequence belongs to the class I-like SAM-binding methyltransferase superfamily. rRNA adenine N(6)-methyltransferase family. RsmA subfamily.

The protein resides in the cytoplasm. The catalysed reaction is adenosine(1518)/adenosine(1519) in 16S rRNA + 4 S-adenosyl-L-methionine = N(6)-dimethyladenosine(1518)/N(6)-dimethyladenosine(1519) in 16S rRNA + 4 S-adenosyl-L-homocysteine + 4 H(+). In terms of biological role, specifically dimethylates two adjacent adenosines (A1518 and A1519) in the loop of a conserved hairpin near the 3'-end of 16S rRNA in the 30S particle. May play a critical role in biogenesis of 30S subunits. This chain is Ribosomal RNA small subunit methyltransferase A, found in Wigglesworthia glossinidia brevipalpis.